A 242-amino-acid chain; its full sequence is Biosynthetic peptidoglycan transglycosylase (242 aa).

A helical membrane pass occupies residues 19–39 (LMVVLAVFWGGGIALFSVAPV).

Belongs to the glycosyltransferase 51 family.

It is found in the cell inner membrane. The enzyme catalyses [GlcNAc-(1-&gt;4)-Mur2Ac(oyl-L-Ala-gamma-D-Glu-L-Lys-D-Ala-D-Ala)](n)-di-trans,octa-cis-undecaprenyl diphosphate + beta-D-GlcNAc-(1-&gt;4)-Mur2Ac(oyl-L-Ala-gamma-D-Glu-L-Lys-D-Ala-D-Ala)-di-trans,octa-cis-undecaprenyl diphosphate = [GlcNAc-(1-&gt;4)-Mur2Ac(oyl-L-Ala-gamma-D-Glu-L-Lys-D-Ala-D-Ala)](n+1)-di-trans,octa-cis-undecaprenyl diphosphate + di-trans,octa-cis-undecaprenyl diphosphate + H(+). It participates in cell wall biogenesis; peptidoglycan biosynthesis. Peptidoglycan polymerase that catalyzes glycan chain elongation from lipid-linked precursors. The sequence is that of Biosynthetic peptidoglycan transglycosylase from Escherichia coli O157:H7.